The following is a 290-amino-acid chain: Ribosomal RNA small subunit methyltransferase A (290 aa).

S-adenosyl-L-methionine-binding residues include Asn27, Leu29, Gly54, Glu75, Asp100, and Asn125.

The protein belongs to the class I-like SAM-binding methyltransferase superfamily. rRNA adenine N(6)-methyltransferase family. RsmA subfamily.

It localises to the cytoplasm. The catalysed reaction is adenosine(1518)/adenosine(1519) in 16S rRNA + 4 S-adenosyl-L-methionine = N(6)-dimethyladenosine(1518)/N(6)-dimethyladenosine(1519) in 16S rRNA + 4 S-adenosyl-L-homocysteine + 4 H(+). Functionally, specifically dimethylates two adjacent adenosines (A1518 and A1519) in the loop of a conserved hairpin near the 3'-end of 16S rRNA in the 30S particle. May play a critical role in biogenesis of 30S subunits. The sequence is that of Ribosomal RNA small subunit methyltransferase A from Streptococcus pneumoniae (strain 70585).